Reading from the N-terminus, the 243-residue chain is Tryptophan synthase alpha chain (243 aa).

Residues Glu32 and Asp43 each act as proton acceptor in the active site.

The protein belongs to the TrpA family. As to quaternary structure, tetramer of two alpha and two beta chains.

It localises to the plastid. It is found in the chloroplast. The catalysed reaction is (1S,2R)-1-C-(indol-3-yl)glycerol 3-phosphate + L-serine = D-glyceraldehyde 3-phosphate + L-tryptophan + H2O. Its pathway is amino-acid biosynthesis; L-tryptophan biosynthesis; L-tryptophan from chorismate: step 5/5. Functionally, the alpha subunit is responsible for the aldol cleavage of indoleglycerol phosphate to indole and glyceraldehyde 3-phosphate. This is Tryptophan synthase alpha chain from Cyanidioschyzon merolae (strain NIES-3377 / 10D) (Unicellular red alga).